Reading from the N-terminus, the 317-residue chain is Beta-ketoacyl-[acyl-carrier-protein] synthase III (317 aa).

Active-site residues include Cys-112 and His-244. Positions 245–249 are ACP-binding; it reads QANLR. Asn-274 is a catalytic residue.

Belongs to the thiolase-like superfamily. FabH family. As to quaternary structure, homodimer.

The protein resides in the cytoplasm. The enzyme catalyses malonyl-[ACP] + acetyl-CoA + H(+) = 3-oxobutanoyl-[ACP] + CO2 + CoA. The protein operates within lipid metabolism; fatty acid biosynthesis. Its function is as follows. Catalyzes the condensation reaction of fatty acid synthesis by the addition to an acyl acceptor of two carbons from malonyl-ACP. Catalyzes the first condensation reaction which initiates fatty acid synthesis and may therefore play a role in governing the total rate of fatty acid production. Possesses both acetoacetyl-ACP synthase and acetyl transacylase activities. Its substrate specificity determines the biosynthesis of branched-chain and/or straight-chain of fatty acids. The protein is Beta-ketoacyl-[acyl-carrier-protein] synthase III of Enterobacter sp. (strain 638).